The sequence spans 721 residues: Polyribonucleotide nucleotidyltransferase (721 aa).

Aspartate 485 and aspartate 491 together coordinate Mg(2+). Residues 552–611 enclose the KH domain; sequence PKIYIVKIHPDKIREIIGPGGKVIRELQAMSNTRIEVDDSGTVKIAASTEEEARIAIKAV. The region spanning 621–689 is the S1 motif domain; that stretch reads GEIYEGEVVR…PEGKIRLSRK (69 aa). The segment at 687 to 721 is disordered; that stretch reads SRKALLPAPEKGEEDEKSAPRSRRPGGNSDRRNNR.

It belongs to the polyribonucleotide nucleotidyltransferase family. It depends on Mg(2+) as a cofactor.

It localises to the cytoplasm. The catalysed reaction is RNA(n+1) + phosphate = RNA(n) + a ribonucleoside 5'-diphosphate. Its function is as follows. Involved in mRNA degradation. Catalyzes the phosphorolysis of single-stranded polyribonucleotides processively in the 3'- to 5'-direction. The polypeptide is Polyribonucleotide nucleotidyltransferase (Desulfosudis oleivorans (strain DSM 6200 / JCM 39069 / Hxd3) (Desulfococcus oleovorans)).